A 351-amino-acid chain; its full sequence is Anthranilate phosphoribosyltransferase (351 aa).

5-phospho-alpha-D-ribose 1-diphosphate contacts are provided by residues Gly85, 88–89, Ser93, 95–98, 113–121, and Thr125; these read GD, NIST, and KHGNRAASS. Gly85 is an anthranilate binding site. Ser97 is a Mg(2+) binding site. Asn116 contributes to the anthranilate binding site. Arg171 is a binding site for anthranilate. Mg(2+)-binding residues include Asp229 and Glu230.

It belongs to the anthranilate phosphoribosyltransferase family. As to quaternary structure, homodimer. It depends on Mg(2+) as a cofactor.

The catalysed reaction is N-(5-phospho-beta-D-ribosyl)anthranilate + diphosphate = 5-phospho-alpha-D-ribose 1-diphosphate + anthranilate. Its pathway is amino-acid biosynthesis; L-tryptophan biosynthesis; L-tryptophan from chorismate: step 2/5. In terms of biological role, catalyzes the transfer of the phosphoribosyl group of 5-phosphorylribose-1-pyrophosphate (PRPP) to anthranilate to yield N-(5'-phosphoribosyl)-anthranilate (PRA). This is Anthranilate phosphoribosyltransferase from Saccharopolyspora erythraea (strain ATCC 11635 / DSM 40517 / JCM 4748 / NBRC 13426 / NCIMB 8594 / NRRL 2338).